The chain runs to 446 residues: Glutamine synthetase (446 aa).

The GS beta-grasp domain maps to 18–103; sequence ENVRYLRLQF…LICDVYKTDG (86 aa). The GS catalytic domain occupies 110-446; that stretch reads PRANLKRVLK…WERDQYMKQY (337 aa). Residues glutamate 134 and glutamate 136 each coordinate Mg(2+). Glutamate 186 provides a ligand contact to ATP. 2 residues coordinate Mg(2+): glutamate 191 and glutamate 198. L-glutamate is bound by residues 242-243 and glycine 243; that span reads NG. Residue histidine 247 participates in Mg(2+) binding. Serine 251 lines the ATP pocket. Arginine 300, glutamate 306, and arginine 318 together coordinate L-glutamate. Residues arginine 318 and arginine 323 each coordinate ATP. Residue glutamate 335 participates in Mg(2+) binding. Arginine 337 serves as a coordination point for L-glutamate.

It belongs to the glutamine synthetase family. In terms of assembly, oligomer of 12 subunits arranged in the form of two hexagons. In its feedback-inhibited form, interacts with TnrA in order to block its DNA-binding activity. Requires Mg(2+) as cofactor.

It is found in the cytoplasm. The catalysed reaction is L-glutamate + NH4(+) + ATP = L-glutamine + ADP + phosphate + H(+). Its activity is regulated as follows. Inhibited by glutamine. Its function is as follows. Glutamine synthetase (GS) is an unusual multitasking protein that functions as an enzyme, a transcription coregulator, and a chaperone in ammonium assimilation and in the regulation of genes involved in nitrogen metabolism. It catalyzes the ATP-dependent biosynthesis of glutamine from glutamate and ammonia. Feedback-inhibited GlnA also interacts with and regulates the activity of the transcriptional regulator TnrA. During nitrogen limitation, TnrA is in its DNA-binding active state and turns on the transcription of genes required for nitrogen assimilation. Under conditions of nitrogen excess, feedback-inhibited GlnA forms a stable complex with TnrA, which inhibits its DNA-binding activity. In contrast, feedback-inhibited GlnA acts as a chaperone to stabilize the DNA-binding activity of GlnR, which represses the transcription of nitrogen assimilation genes. This chain is Glutamine synthetase, found in Staphylococcus aureus (strain MSSA476).